Here is a 369-residue protein sequence, read N- to C-terminus: Phospho-N-acetylmuramoyl-pentapeptide-transferase (369 aa).

A run of 10 helical transmembrane segments spans residues 2–22, 55–75, 86–106, 122–142, 158–178, 196–216, 239–259, 266–286, 291–311, and 348–368; these read IALL…TPLF, TVVV…MWMM, ALLL…DDFI, LVLQ…FPNA, IPWL…FVLW, LDGL…LMGI, PLDL…FLWW, IFMG…FAIL, LLLA…IIQV, and ILGG…WVVL.

It belongs to the glycosyltransferase 4 family. MraY subfamily. The cofactor is Mg(2+).

It localises to the cell membrane. The catalysed reaction is UDP-N-acetyl-alpha-D-muramoyl-L-alanyl-gamma-D-glutamyl-meso-2,6-diaminopimeloyl-D-alanyl-D-alanine + di-trans,octa-cis-undecaprenyl phosphate = di-trans,octa-cis-undecaprenyl diphospho-N-acetyl-alpha-D-muramoyl-L-alanyl-D-glutamyl-meso-2,6-diaminopimeloyl-D-alanyl-D-alanine + UMP. It participates in cell wall biogenesis; peptidoglycan biosynthesis. Its function is as follows. Catalyzes the initial step of the lipid cycle reactions in the biosynthesis of the cell wall peptidoglycan: transfers peptidoglycan precursor phospho-MurNAc-pentapeptide from UDP-MurNAc-pentapeptide onto the lipid carrier undecaprenyl phosphate, yielding undecaprenyl-pyrophosphoryl-MurNAc-pentapeptide, known as lipid I. The polypeptide is Phospho-N-acetylmuramoyl-pentapeptide-transferase (Arthrobacter sp. (strain FB24)).